Here is a 394-residue protein sequence, read N- to C-terminus: Na(+)/H(+) antiporter NhaA (394 aa).

11 helical membrane passes run 17–37, 59–79, 95–115, 124–144, 154–174, 177–197, 213–233, 261–281, 287–307, 328–348, and 363–383; these read ILLMVAVALAMILANSPLAGV, LLLWINDGLMALFFLLIGLEV, SLPSIAAIGGMVFPALFYLAF, VGWAIPAATDIAFALGIMALL, VFLLALAIIDDLGVIVIIALF, TDLSMTSLVIAAVSIVLMVAL, FILWVAVLKSGVHATLAGVII, FMILPVFAFANAGLSLTNMTL, PITLGIIMGLLLGKPIGVLLF, IIPVAVMCGIGFTMSVFIASL, and LGILTGSLLAALIGYFWLAKV.

It belongs to the NhaA Na(+)/H(+) (TC 2.A.33) antiporter family.

The protein localises to the cell inner membrane. It catalyses the reaction Na(+)(in) + 2 H(+)(out) = Na(+)(out) + 2 H(+)(in). In terms of biological role, na(+)/H(+) antiporter that extrudes sodium in exchange for external protons. The protein is Na(+)/H(+) antiporter NhaA of Shewanella frigidimarina (strain NCIMB 400).